The chain runs to 142 residues: Galactose-6-phosphate isomerase subunit LacA 2 (142 aa).

The protein belongs to the LacAB/RpiB family. Heteromultimeric protein consisting of LacA and LacB.

The catalysed reaction is aldehydo-D-galactose 6-phosphate = keto-D-tagatose 6-phosphate. It participates in carbohydrate metabolism; D-galactose 6-phosphate degradation; D-tagatose 6-phosphate from D-galactose 6-phosphate: step 1/1. This is Galactose-6-phosphate isomerase subunit LacA 2 from Streptococcus pyogenes serotype M1.